A 336-amino-acid polypeptide reads, in one-letter code: MSAKMYYDRDVDTQVLENKLIAIIGYGSQAHAHAQNLRDSGFNVVVGLREGSSSKAKAEQAGLRVASIEDATKEADVVMLLIPDEQQPAVYEKSIAPHLTAGKALAFGHGFNVHFGRIKPPADVDVFLVAPKGPGHMLRRVYTDGAGMPGIFAVQQDASGKARDIALAYARGIGCTKAGVLETTFKEETETDLFGEQSVLCGGVTHLIQAGFETLVEAGYQPEIAYFETLHEVKLIVDLIYEKGFEGMRHSISNTAEFGDYVTGPRIITDQTKAEMKNVLGDIQSGKFAESFIKDAESGFPYMNEQRSKMRDHTVEKVGKELRDQMPFINKKELEV.

Positions 3 to 183 (AKMYYDRDVD…GCTKAGVLET (181 aa)) constitute a KARI N-terminal Rossmann domain. NADP(+)-binding positions include 26–29 (YGSQ), Arg-49, Ser-52, Ser-54, and 84–87 (DEQQ). His-109 is a catalytic residue. Position 135 (Gly-135) interacts with NADP(+). In terms of domain architecture, KARI C-terminal knotted spans 184-329 (TFKEETETDL…KELRDQMPFI (146 aa)). Mg(2+) is bound by residues Asp-192, Glu-196, Glu-228, and Glu-232. Ser-253 is a substrate binding site.

The protein belongs to the ketol-acid reductoisomerase family. The cofactor is Mg(2+).

It carries out the reaction (2R)-2,3-dihydroxy-3-methylbutanoate + NADP(+) = (2S)-2-acetolactate + NADPH + H(+). It catalyses the reaction (2R,3R)-2,3-dihydroxy-3-methylpentanoate + NADP(+) = (S)-2-ethyl-2-hydroxy-3-oxobutanoate + NADPH + H(+). The protein operates within amino-acid biosynthesis; L-isoleucine biosynthesis; L-isoleucine from 2-oxobutanoate: step 2/4. Its pathway is amino-acid biosynthesis; L-valine biosynthesis; L-valine from pyruvate: step 2/4. In terms of biological role, involved in the biosynthesis of branched-chain amino acids (BCAA). Catalyzes an alkyl-migration followed by a ketol-acid reduction of (S)-2-acetolactate (S2AL) to yield (R)-2,3-dihydroxy-isovalerate. In the isomerase reaction, S2AL is rearranged via a Mg-dependent methyl migration to produce 3-hydroxy-3-methyl-2-ketobutyrate (HMKB). In the reductase reaction, this 2-ketoacid undergoes a metal-dependent reduction by NADPH to yield (R)-2,3-dihydroxy-isovalerate. The protein is Ketol-acid reductoisomerase (NADP(+)) of Deinococcus radiodurans (strain ATCC 13939 / DSM 20539 / JCM 16871 / CCUG 27074 / LMG 4051 / NBRC 15346 / NCIMB 9279 / VKM B-1422 / R1).